Consider the following 601-residue polypeptide: Glutathione-regulated potassium-efflux system protein KefB (601 aa).

The next 13 helical transmembrane spans lie at 4-24, 29-49, 55-75, 87-107, 111-131, 152-172, 177-197, 207-227, 230-250, 262-282, 284-304, 324-344, and 356-376; these read ADLLTAGVLFLFAAVAAVPLA, IGAVLGYLLAGIAIGPWGLGF, EILHFSELGVVFLMFIIGLEL, IFGVGAAQVLLSAAVLAGLLM, FLWQAAVVGGIGLAMSSTAMA, VLLFQDLAVIPALALVPLLAG, HFDWFKVAMKVLAFAVMLIGG, FIAASGVREVFTAATLLLVLS, LFMDALGLSMALGTFIAGVLL, AIDPFKGLLLGLFFISVGMSL, LGVLYTHLLWVAASVVILVAI, MQFASVLSQGGEFAFVLFSTA, and ALLLVTVTLSMMTTPLLMKGI. The region spanning 400 to 519 is the RCK N-terminal domain; that stretch reads KPQVIVVGFG…AGVTQFSRET (120 aa).

It belongs to the monovalent cation:proton antiporter 2 (CPA2) transporter (TC 2.A.37) family. KefB subfamily. In terms of assembly, interacts with the regulatory subunit KefG.

It is found in the cell inner membrane. Pore-forming subunit of a potassium efflux system that confers protection against electrophiles. Catalyzes K(+)/H(+) antiport. The polypeptide is Glutathione-regulated potassium-efflux system protein KefB (Salmonella schwarzengrund (strain CVM19633)).